The sequence spans 367 residues: D-alanine--D-alanine ligase (367 aa).

The 207-residue stretch at 145-351 folds into the ATP-grasp domain; that stretch reads KRLLRDAGLP…QPALMDELVA (207 aa). Residue 174 to 229 participates in ATP binding; sequence RAVGSSELFVKPANLGSSVGISKTRDAAEFEAACQLALRFDRKILIERCIAPVREI. Residues Asp306, Glu318, and Asn320 each contribute to the Mg(2+) site.

This sequence belongs to the D-alanine--D-alanine ligase family. It depends on Mg(2+) as a cofactor. Requires Mn(2+) as cofactor.

It is found in the cytoplasm. It carries out the reaction 2 D-alanine + ATP = D-alanyl-D-alanine + ADP + phosphate + H(+). Its pathway is cell wall biogenesis; peptidoglycan biosynthesis. Functionally, cell wall formation. This Bradyrhizobium sp. (strain ORS 278) protein is D-alanine--D-alanine ligase.